The chain runs to 499 residues: ALBINO3-like protein 1, chloroplastic (499 aa).

Residues 1–45 (MSSTISLKPTHLILSSFSTGKVLQFRRSRFSHTPSSSSSRYRTLV) constitute a chloroplast transit peptide. Helical transmembrane passes span 115–135 (LSTV…TVLV), 184–204 (LAGI…PVWI), 263–283 (LAYL…IQIM), and 302–322 (LLPL…SLYW). Residues 378–499 (LKIPREKGGE…QQHSHETEKR (122 aa)) form a disordered region. 3 stretches are compositionally biased toward basic and acidic residues: residues 379–420 (KIPR…RQKA), 430–452 (DKAH…KKTE), and 486–499 (HDTE…TEKR). The stretch at 397 to 436 (GERFRLLKEQEAKRRREKEERQKAEAALSNQNTDKAHEQD) forms a coiled coil.

It belongs to the OXA1/ALB3/YidC (TC 2.A.9.2) family. As to quaternary structure, homodimer. Interacts with ALB3. Interacts with STIC2. As to expression, highly expressed in green tissues.

Its subcellular location is the plastid. The protein localises to the chloroplast thylakoid membrane. In terms of biological role, required for the insertion of some light harvesting chlorophyll-binding proteins (LHCP) into the chloroplast thylakoid membrane. Plays a role in the accumulation of some cytochrome b6f components in the thylakoid membrane. Required for the assembly and/or stability of the F(1)F(0) ATP synthase in chloroplast thylakoid membranes. Functions to stabilize or promote assembly of F(1) during its attachment to the membrane-embedded F(0) part. Participates with STIC2 in thylakoid protein targeting. May function with a specific subset of thylakoidal proteins. The polypeptide is ALBINO3-like protein 1, chloroplastic (Arabidopsis thaliana (Mouse-ear cress)).